Reading from the N-terminus, the 177-residue chain is UPF0102 protein BPP4042 (177 aa).

The disordered stretch occupies residues 13–43; that stretch reads AAQAQRRLHRRPPASPRASPGARDGGSPTQR.

Belongs to the UPF0102 family.

The sequence is that of UPF0102 protein BPP4042 from Bordetella parapertussis (strain 12822 / ATCC BAA-587 / NCTC 13253).